The following is a 210-amino-acid chain: Redox-sensing transcriptional repressor Rex (210 aa).

Residues 17–56 (KYHRYLNELMKNDVDRISSKELGEKIGFTASQIRQDLNCF) constitute a DNA-binding region (H-T-H motif). 91-96 (GAGNIG) serves as a coordination point for NAD(+).

It belongs to the transcriptional regulatory Rex family. In terms of assembly, homodimer.

Its subcellular location is the cytoplasm. Modulates transcription in response to changes in cellular NADH/NAD(+) redox state. This is Redox-sensing transcriptional repressor Rex from Clostridium botulinum (strain Alaska E43 / Type E3).